The primary structure comprises 128 residues: Calcitonin gene-related peptide 1 (128 aa).

The first 25 residues, methionine 1–alanine 25, serve as a signal peptide directing secretion. Positions valine 26–glutamine 80 are excised as a propeptide. A disulfide bridge links cysteine 84 with cysteine 89. Phenylalanine 119 bears the Phenylalanine amide mark. Positions aspartate 125–alanine 128 are excised as a propeptide.

This sequence belongs to the calcitonin family. Detected in nerve cells of cerebrum, hippocampus and pons/midbrain in newborns, and only in nerve cells of pons/midbrain in adult.

It is found in the secreted. In terms of biological role, CGRP1/CALCA is a peptide hormone that induces vasodilation mediated by the CALCRL-RAMP1 receptor complex. Dilates a variety of vessels including the coronary, cerebral and systemic vasculature. Its abundance in the CNS also points toward a neurotransmitter or neuromodulator role. It also elevates platelet cAMP. CGRP1 can also bind and activate CALCR-RAMP1 (AMYR1) receptor complex. This Mus musculus (Mouse) protein is Calcitonin gene-related peptide 1.